The chain runs to 161 residues: Phenolic acid decarboxylase PadC (161 aa).

Positions 11 and 13 each coordinate substrate. Tyrosine 19 functions as the Proton donor in the catalytic mechanism. Arginine 41 provides a ligand contact to substrate. Glutamate 64 acts as the Proton acceptor in catalysis.

This sequence belongs to the PadC family. As to quaternary structure, homodimer.

It catalyses the reaction (E)-4-coumarate + H(+) = 4-vinylphenol + CO2. The enzyme catalyses (E)-cinnamate + H(+) = styrene + CO2. The catalysed reaction is (E)-ferulate + H(+) = 2-methoxy-4-vinylphenol + CO2. In terms of biological role, involved in the decarboxylation and detoxification of phenolic derivatives. It is able to catalyze the decarboxylation of ferulic, p-coumaric and caffeic acids. The chain is Phenolic acid decarboxylase PadC (padC) from Bacillus subtilis (strain 168).